The sequence spans 425 residues: Argininosuccinate synthase (425 aa).

ATP contacts are provided by residues 7-15 (AYSGGLDTS) and Ala-33. An L-citrulline-binding site is contributed by Tyr-84. Gly-114 is an ATP binding site. L-aspartate is bound by residues Thr-116, Asn-120, and Asp-121. Asn-120 serves as a coordination point for L-citrulline. 5 residues coordinate L-citrulline: Arg-124, Ser-177, Ser-186, Glu-267, and Tyr-279.

It belongs to the argininosuccinate synthase family. Type 1 subfamily. In terms of assembly, homotetramer.

It localises to the cytoplasm. The enzyme catalyses L-citrulline + L-aspartate + ATP = 2-(N(omega)-L-arginino)succinate + AMP + diphosphate + H(+). It functions in the pathway amino-acid biosynthesis; L-arginine biosynthesis; L-arginine from L-ornithine and carbamoyl phosphate: step 2/3. This is Argininosuccinate synthase from Pseudothermotoga lettingae (strain ATCC BAA-301 / DSM 14385 / NBRC 107922 / TMO) (Thermotoga lettingae).